The chain runs to 181 residues: UPF0316 protein Bcer98_2136 (181 aa).

Transmembrane regions (helical) follow at residues 6 to 26, 32 to 52, and 58 to 78; these read LIFV…ILLV, SAAG…GIVF, and WMNI…GGYI.

It belongs to the UPF0316 family.

It localises to the cell membrane. This chain is UPF0316 protein Bcer98_2136, found in Bacillus cytotoxicus (strain DSM 22905 / CIP 110041 / 391-98 / NVH 391-98).